Consider the following 2547-residue polypeptide: Piezo-type mechanosensitive ion channel component 1 (2547 aa).

Residues 1 to 12 (MEPHVLGAGLYW) lie on the Cytoplasmic side of the membrane. A helical transmembrane segment spans residues 13 to 25 (LLLPCTLLAASLL). The Extracellular portion of the chain corresponds to 26–28 (RFN). Residues 29 to 44 (ALSLVYLLFLLLLPWL) form a helical membrane-spanning segment. Over 45-58 (PGPSRHSIPGHTGR) the chain is Cytoplasmic. Residues 59-81 (LLRALLCLSLLFLVAHLAFQICL) traverse the membrane as a helical segment. At 82–121 (HTVPHLDQFLGQNGSLWVKVSQHIGVTRLDLKDIFNTTRL) the chain is on the extracellular side. N-linked (GlcNAc...) asparagine glycosylation occurs at asparagine 94. A helical membrane pass occupies residues 122-138 (VAPDLGVLLASSLCLGL). The Cytoplasmic portion of the chain corresponds to 139–201 (CGRLTRKAGQ…ASRFRVTAHW (63 aa)). Residues 202–221 (LLMTSGRTLVIVLLALAGIA) traverse the membrane as a helical segment. Residues 222–223 (HP) are Extracellular-facing. Residues 224 to 243 (SAFSSIYLVVFLAICTWWSC) traverse the membrane as a helical segment. Topologically, residues 244–254 (HFPLSPLGFNT) are cytoplasmic. Residues 255–275 (LCVMVSCFGAGHLICLYCYQT) traverse the membrane as a helical segment. Residues 276 to 316 (PFIQDMLPPGNIWARLFGLKNFVDLPNYSSPNALVLNTKHA) are Extracellular-facing. The helical transmembrane segment at 317–337 (WPIYVSPGILLLLYYTATSLL) threads the bilayer. Topologically, residues 338 to 424 (KLHKSCPSEL…EMSPLHGLGH (87 aa)) are cytoplasmic. The segment at 347–387 (LRKETPREDEEHELELDHLEPEPQARDATQGEMPMTTEPDL) is disordered. Basic and acidic residues predominate over residues 361–371 (ELDHLEPEPQA). A helical membrane pass occupies residues 425 to 445 (LIMDQSYVCALIAMMVWSIMY). The Extracellular segment spans residues 446–447 (HS). A helical membrane pass occupies residues 448–463 (WLTFVLLLWACLIWTV). Topologically, residues 464 to 468 (RSRHQ) are cytoplasmic. A helical transmembrane segment spans residues 469–491 (LAMLCSPCILLYGLTLCCLRYVW). At 492 to 518 (AMELPELPTTLGPVSLHQLGLEHTRYP) the chain is on the extracellular side. The helical transmembrane segment at 519-536 (CLDLGAMLLYLLTFWLLL) threads the bilayer. The Cytoplasmic segment spans residues 537–580 (RQFVKEKLLKKQKVPAALLEVTVADTEPTQTQTLLRSLGELVTG). The helical transmembrane segment at 581 to 601 (IYVKYWIYVCAGMFIVVSFAG) threads the bilayer. Position 602 (arginine 602) is a topological domain, extracellular. Residues 603-623 (LVVYKIVYMFLFLLCLTLFQV) traverse the membrane as a helical segment. At 624–633 (YYTLWRKLLR) the chain is on the cytoplasmic side. Residues 634-655 (VFWWLVVAYTMLVLIAVYTFQF) traverse the membrane as a helical segment. At 656 to 685 (QDFPTYWRNLTGFTDEQLGDLGLEQFSVSE) the chain is on the extracellular side. A helical transmembrane segment spans residues 686–702 (LFSSILIPGFFLLACIL). At 703–811 (QLHYFHRPFM…RRLLELHVFK (109 aa)) the chain is on the cytoplasmic side. Phosphoserine is present on serine 758. The helical transmembrane segment at 812 to 823 (LVALYTVWVALK) threads the bilayer. Residues 824–826 (EVS) are Extracellular-facing. Residues 827–840 (VMNLLLVVLWAFAL) form a helical membrane-spanning segment. Residues 841–854 (PYPRFRPMASCLST) lie on the Cytoplasmic side of the membrane. A helical transmembrane segment spans residues 855–869 (VWTCIIIVCKMLYQL). The Extracellular segment spans residues 870–921 (KIVNPHEYSSNCTEPFPNNTNLQPLEINQSLLYRGPVDPANWFGVRKGYPNL). A helical membrane pass occupies residues 922 to 949 (GYIQNHLQILLLLVFEAVVYRRQEHYRR). Residues 950-989 (QHQQAPLPAQAVCADGTRQRLDQDLLSCLKYFINFFFYKF) are Cytoplasmic-facing. The helical transmembrane segment at 990 to 1005 (GLEICFLMAVNVIGQR) threads the bilayer. Over 1006–1007 (MN) the chain is Extracellular. The chain crosses the membrane as a helical span at residues 1008 to 1023 (FMVILHGCWLVAILTR). At 1024–1036 (RRREAIARLWPNY) the chain is on the cytoplasmic side. A helical transmembrane segment spans residues 1037–1052 (CLFLTLFLLYQYLLCL). At 1053 to 1091 (GMPPALCIDYPWRWSKAIPMNSALIKWLYLPDFFRAPNS) the chain is on the extracellular side. A helical membrane pass occupies residues 1092–1113 (TNLISDFLLLLCASQQWQVFSA). Residues 1114-1148 (ERTEEWQRMAGINTDHLEPLRGEPNPIPNFIHCRS) lie on the Cytoplasmic side of the membrane. A helical membrane pass occupies residues 1149–1175 (YLDMLKVAVFRYLFWLVLVVVFVAGAT). Topologically, residues 1176–1180 (RISIF) are extracellular. The helical transmembrane segment at 1181 to 1199 (GLGYLLACFYLLLFGTTLL) threads the bilayer. At 1200 to 1212 (QKDTRAQLVLWDC) the chain is on the cytoplasmic side. Residues 1213–1231 (LILYNVTVIISKNMLSLLS) form a helical membrane-spanning segment. At 1232 to 1280 (CVFVEQMQSNFCWVIQLFSLVCTVKGYYDPKEMMTRDRDCLLPVEEAGI) the chain is on the extracellular side. A helical transmembrane segment spans residues 1281–1297 (IWDSICFFFLLLQRRIF). Over 1298 to 1656 (LSHYFLHVSA…ELLLDRRLHI (359 aa)) the chain is Cytoplasmic. Positions 1334 to 1365 (HRQIEEKSLAQLKRQMKRIRAKQEKYRQSQAS) form a coiled coil. 3 disordered regions span residues 1354 to 1396 (AKQE…RRQW), 1456 to 1480 (RRER…DVEP), and 1567 to 1610 (TLSG…NTRS). The segment covering 1361–1372 (QSQASRGQLQSK) has biased composition (polar residues). Over residues 1376–1392 (DPSQEPGPDSPGGSSPP) the composition is skewed to low complexity. 2 positions are modified to phosphoserine: serine 1385 and serine 1390. Polar residues predominate over residues 1592–1610 (SSMTDDTSSPLSTGYNTRS). A phosphoserine mark is found at serine 1627, serine 1631, and serine 1646. The chain crosses the membrane as a helical span at residues 1657–1700 (PELEEAERFEAQQGRTLRLLRAGYQCVAAHSELLCYFIIILNHM). The Extracellular portion of the chain corresponds to 1701–1704 (VTAS). The chain crosses the membrane as a helical span at residues 1705-1720 (AASLVLPVLVFLWAML). At 1721–1728 (TIPRPSKR) the chain is on the cytoplasmic side. A helical transmembrane segment spans residues 1729–1747 (FWMTAIVFTEVMVVTKYLF). Over 1748-1779 (QFGFFPWNSYVVLRRYENKPYFPPRILGLEKT) the chain is Extracellular. The helical transmembrane segment at 1780–1801 (DSYIKYDLVQLMALFFHRSQLL) threads the bilayer. The Cytoplasmic segment spans residues 1802–1976 (CYGLWDHEED…HTKYRAATDV (175 aa)). Basic and acidic residues-rich tracts occupy residues 1816–1837 (DHCR…KLES) and 1855–1880 (PRDH…DLKP). The segment at 1816-1931 (DHCRSSVKDR…RPRHTQEKSK (116 aa)) is disordered. The span at 1881-1894 (RHTRHISIRFRRRK) shows a compositional bias: basic residues. Positions 1912–1931 (GEGKETTERKRPRHTQEKSK) are enriched in basic and acidic residues. Residues 1977–1996 (YALMFLADIVDIIIIIFGFW) form a helical membrane-spanning segment. Topologically, residues 1997-2016 (AFGKHSAATDIASSLSDDQV) are extracellular. Residues 2017–2033 (PQAFLFMLLVQFGTMVI) traverse the membrane as a helical segment. Residues 2034-2047 (DRALYLRKTVLGKL) lie on the Cytoplasmic side of the membrane. The chain crosses the membrane as a helical span at residues 2048–2068 (AFQVVLVVAIHIWMFFILPAV). Topologically, residues 2069 to 2076 (TERMFSQN) are extracellular. A helical transmembrane segment spans residues 2077 to 2092 (AVAQLWYFVKCIYFAL). Residues 2093–2192 (SAYQIRCGYP…KKKIVKYGMG (100 aa)) are Cytoplasmic-facing. Residues 2193–2213 (GLIILFLIAIIWFPLLFMSLI) form a helical membrane-spanning segment. Residues 2214 to 2457 (RSVVGVVNQP…IFSDKVSPPS (244 aa)) lie on the Extracellular side of the membrane. The cysteines at positions 2437 and 2441 are disulfide-linked. Residues 2458–2478 (LGFLAGYGIVGLYVSIVLVVG) form a helical membrane-spanning segment. The Cytoplasmic segment spans residues 2479–2547 (KFVRGFFSEI…TMIKWTRERE (69 aa)).

The protein belongs to the PIEZO (TC 1.A.75) family. Homotrimer; the homotrimer forms a propeller-shaped Piezo channel with a cation-ion conducting pore. Heterotrimeric interaction may occur between PIEZO1 and PIEZO2. Interacts with PKD2. Interacts with STOMl3. Interacts with TMC1, TMC2, PCDG15 and CIB2; the interaction may be part of the MET complex. Interacts with MDFIC (via C-terminus); the interaction prolongs Piezo channel inactivation. Interacts with MDFI (via C-terminus); the interaction prolongs Piezo channel inactivation. As to expression, expressed in bladder, colon, kidney and skin. Also expressed in bone marrow, liver, lung, spleen and erythrocytes (at protein level). Expressed in myoblasts (at protein level). Expressed in red blood cells. Expressed in cochlear inner and outer hair cells (IHCs and OHCs) and vestibular organ HCs.

Its subcellular location is the endoplasmic reticulum membrane. The protein resides in the endoplasmic reticulum-Golgi intermediate compartment membrane. It localises to the cell membrane. It is found in the cell projection. The protein localises to the lamellipodium membrane. It catalyses the reaction K(+)(in) = K(+)(out). It carries out the reaction Na(+)(in) = Na(+)(out). The catalysed reaction is Ca(2+)(in) = Ca(2+)(out). The enzyme catalyses Mg(2+)(in) = Mg(2+)(out). With respect to regulation, regulated by auxillary subunits MDFIC and MDFI. Down-regulated by phosphatidylserines exposed on the cell surface. Divalent ions decrease the single-channel permeability of K(+). Its function is as follows. Pore-forming subunit of the mechanosensitive non-specific cation Piezo channel required for rapidly adapting mechanically activated (MA) currents and has a key role in sensing touch and tactile pain. Piezo channels are homotrimeric three-blade propeller-shaped structures that utilize a cap-motion and plug-and-latch mechanism to gate their ion-conducting pathways. Generates currents characterized by a linear current-voltage relationship that are sensitive to ruthenium red and gadolinium. Conductance to monovalent alkali ions is highest for K(+), intermediate for Na(+) and lowest for Li(+). Divalent ions except for Mn(2+) permeate the channel but more slowly than the monovalent ions and they also reduce K(+) currents. Plays a key role in epithelial cell adhesion by maintaining integrin activation through R-Ras recruitment to the ER, most probably in its activated state, and subsequent stimulation of calpain signaling. In inner ear hair cells, PIEZO1/2 subunits may constitute part of the mechanotransducer (MET) non-selective cation channel complex where they may act as pore-forming ion-conducting component in the complex. In the kidney, may contribute to the detection of intraluminal pressure changes and to urine flow sensing. Acts as a shear-stress sensor that promotes endothelial cell organization and alignment in the direction of blood flow through calpain activation. Plays a key role in blood vessel formation and vascular structure in both development and adult physiology. Acts as a sensor of phosphatidylserine (PS) flipping at the plasma membrane and governs morphogenesis of muscle cells. In myoblasts, flippase-mediated PS enrichment at the inner leaflet of plasma membrane triggers channel activation and Ca(2+) influx followed by Rho GTPases signal transduction, leading to assembly of cortical actomyosin fibers and myotube formation. The sequence is that of Piezo-type mechanosensitive ion channel component 1 from Mus musculus (Mouse).